The primary structure comprises 350 residues: DNA polymerase delta subunit 3 (350 aa).

Residues 131–350 (EEKSKPLVRP…LESFFKRKAK (220 aa)) are disordered. 2 stretches are compositionally biased toward basic and acidic residues: residues 146 to 162 (TTPE…KDMG) and 172 to 195 (MKKD…EENL). At T223 the chain carries Phosphothreonine. A Phosphoserine modification is found at S230. Basic and acidic residues predominate over residues 234–248 (SPKETDSNDKDKNND). Positions 249–262 (DLEDLLETTAEDSL) are enriched in acidic residues. Residues 274 to 286 (SETEHSKEPKSEE) show a composition bias toward basic and acidic residues. The segment covering 320-332 (LSSSKKQETPSSN) has biased composition (polar residues).

DNA polymerase delta is a heterotrimer of POL3, POL32 and HYS2. POL32 can form homodimers.

The protein localises to the nucleus. DNA polymerase delta (DNA polymerase III) participates in chromosomal DNA replication. It is required during synthesis of the leading and lagging DNA strands at the replication fork and binds at/or near replication origins and moves along DNA with the replication fork. It has 3'-5' proofreading exonuclease activity that correct errors arising during DNA replication. It is also involved in DNA synthesis during DNA repair. This is DNA polymerase delta subunit 3 (POL32) from Saccharomyces cerevisiae (strain ATCC 204508 / S288c) (Baker's yeast).